The sequence spans 419 residues: Tubby-like protein 4 (419 aa).

Residues 1 to 96 (MAATKREPLR…EREEEEEGSS (96 aa)) form a disordered region. Over residues 33-57 (AKEKEKENEVPTEIGRGKDGGEKKP) the composition is skewed to basic and acidic residues.

Belongs to the TUB family.

The sequence is that of Tubby-like protein 4 (TULP4) from Oryza sativa subsp. japonica (Rice).